The chain runs to 373 residues: Plasmepsin VIII (373 aa).

Positions Met1–Ser21 are cleaved as a signal peptide. The Peptidase A1 domain occupies Phe50–Ala370. Active-site residues include Asp68 and Asp258.

The protein belongs to the peptidase A1 family.

Its function is as follows. During the development in the mosquito vector, plays an essential role in sporozoite egress from the oocyst and sporozoite gliding motility, which is required for the invasion of salivary glands and subsequent transmission to the host. The chain is Plasmepsin VIII from Plasmodium berghei (strain Anka).